We begin with the raw amino-acid sequence, 457 residues long: UDP-N-acetylmuramate--L-alanyl-gamma-D-glutamyl-meso-2,6-diaminoheptandioate ligase (457 aa).

110 to 116 serves as a coordination point for ATP; it reads GTHGKTT.

Belongs to the MurCDEF family. Mpl subfamily. Requires Mg(2+) as cofactor.

Its subcellular location is the secreted. The enzyme catalyses UDP-N-acetyl-alpha-D-muramate + L-alanyl-gamma-D-glutamyl-meso-2,6-diaminopimelate + ATP = UDP-N-acetyl-alpha-D-muramoyl-L-alanyl-gamma-D-glutamyl-meso-2,6-diaminopimelate + ADP + phosphate + H(+). The protein operates within cell wall biogenesis; peptidoglycan recycling. In terms of biological role, reutilizes the intact tripeptide L-alanyl-gamma-D-glutamyl-meso-diaminopimelate by linking it to UDP-N-acetylmuramate. The enzyme can also use the tetrapeptide L-alanyl-gamma-D-glutamyl-meso-2,6-diaminoheptanedioyl-D-alanine or the pentapeptide L-alanyl-gamma-D-glutamyl-meso-2,6-diaminoheptandioyl-D-alanyl-D-alanine in vivo and in vitro. This Escherichia coli (strain K12) protein is UDP-N-acetylmuramate--L-alanyl-gamma-D-glutamyl-meso-2,6-diaminoheptandioate ligase.